A 121-amino-acid polypeptide reads, in one-letter code: UPF0102 protein Strop_1320 (121 aa).

Belongs to the UPF0102 family.

In Salinispora tropica (strain ATCC BAA-916 / DSM 44818 / JCM 13857 / NBRC 105044 / CNB-440), this protein is UPF0102 protein Strop_1320.